A 271-amino-acid chain; its full sequence is Type III pantothenate kinase (271 aa).

6–13 contacts ATP; sequence DVRNTNIV. 109–112 provides a ligand contact to substrate; sequence GADR. Residue D111 is the Proton acceptor of the active site. Residue D131 coordinates K(+). An ATP-binding site is contributed by T134. Substrate is bound at residue T186.

It belongs to the type III pantothenate kinase family. As to quaternary structure, homodimer. Requires NH4(+) as cofactor. K(+) serves as cofactor.

It localises to the cytoplasm. The enzyme catalyses (R)-pantothenate + ATP = (R)-4'-phosphopantothenate + ADP + H(+). The protein operates within cofactor biosynthesis; coenzyme A biosynthesis; CoA from (R)-pantothenate: step 1/5. Catalyzes the phosphorylation of pantothenate (Pan), the first step in CoA biosynthesis. The polypeptide is Type III pantothenate kinase (Rhodococcus erythropolis (strain PR4 / NBRC 100887)).